A 127-amino-acid polypeptide reads, in one-letter code: Large ribosomal subunit protein bL12 (127 aa).

It belongs to the bacterial ribosomal protein bL12 family. Homodimer. Part of the ribosomal stalk of the 50S ribosomal subunit. Forms a multimeric L10(L12)X complex, where L10 forms an elongated spine to which 2 to 4 L12 dimers bind in a sequential fashion. Binds GTP-bound translation factors.

In terms of biological role, forms part of the ribosomal stalk which helps the ribosome interact with GTP-bound translation factors. Is thus essential for accurate translation. The sequence is that of Large ribosomal subunit protein bL12 from Syntrophotalea carbinolica (strain DSM 2380 / NBRC 103641 / GraBd1) (Pelobacter carbinolicus).